The sequence spans 240 residues: 3-dehydroquinate dehydratase (240 aa).

3-dehydroquinate contacts are provided by residues Ser15, 42–44, and Arg73; that span reads EWR. His132 functions as the Proton donor/acceptor in the catalytic mechanism. Residue Lys160 is the Schiff-base intermediate with substrate of the active site. 3-dehydroquinate-binding residues include Arg202, Ser221, and Gln225.

Belongs to the type-I 3-dehydroquinase family. In terms of assembly, homodimer.

The catalysed reaction is 3-dehydroquinate = 3-dehydroshikimate + H2O. Its pathway is metabolic intermediate biosynthesis; chorismate biosynthesis; chorismate from D-erythrose 4-phosphate and phosphoenolpyruvate: step 3/7. Functionally, involved in the third step of the chorismate pathway, which leads to the biosynthesis of aromatic amino acids. Catalyzes the cis-dehydration of 3-dehydroquinate (DHQ) and introduces the first double bond of the aromatic ring to yield 3-dehydroshikimate. This chain is 3-dehydroquinate dehydratase, found in Latilactobacillus sakei subsp. sakei (strain 23K) (Lactobacillus sakei subsp. sakei).